The primary structure comprises 173 residues: Putative metal-dependent hydrolase OB0413 (173 aa).

Histidine 64, histidine 155, and histidine 159 together coordinate Zn(2+).

This sequence belongs to the metal hydrolase YfiT family. Homodimer. Requires Zn(2+) as cofactor.

The protein resides in the cytoplasm. In terms of biological role, possible metal-dependent hydrolase. In Oceanobacillus iheyensis (strain DSM 14371 / CIP 107618 / JCM 11309 / KCTC 3954 / HTE831), this protein is Putative metal-dependent hydrolase OB0413.